A 147-amino-acid polypeptide reads, in one-letter code: Microsomal glutathione S-transferase 2 (147 aa).

The next 3 helical transmembrane spans lie at 6–26 (ILLA…ALQV), 59–79 (FYPI…QVFA), and 111–131 (SLGI…NSFL).

The protein belongs to the MAPEG family. In terms of assembly, homotrimer. In terms of tissue distribution, liver, spleen, skeletal muscle, heart, adrenals, pancreas, prostate, testis, fetal liver, and fetal spleen. Very low expression in lung, brain, placenta and bone marrow. Abundantly expressed in human umbilical vein endothelial cells (at protein level).

Its subcellular location is the endoplasmic reticulum membrane. It is found in the microsome membrane. It carries out the reaction RX + glutathione = an S-substituted glutathione + a halide anion + H(+). The enzyme catalyses 1-chloro-2,4-dinitrobenzene + glutathione = 2,4-dinitrophenyl-S-glutathione + chloride + H(+). It catalyses the reaction leukotriene C4 = leukotriene A4 + glutathione. The catalysed reaction is (5S)-hydroperoxy-(6E,8Z,11Z,14Z)-eicosatetraenoate + 2 glutathione = (5S)-hydroxy-(6E,8Z,11Z,14Z)-eicosatetraenoate + glutathione disulfide + H2O. Each monomer can bind on GSH molecule but only one subunit is catalytically active. Catalyzes several different glutathione-dependent reactions. Catalyzes the glutathione-dependent reduction of lipid hydroperoxides, such as 5-HPETE. Has glutathione transferase activity, toward xenobiotic electrophiles, such as 1-chloro-2, 4-dinitrobenzene (CDNB). Also catalyzes the conjugation of leukotriene A4 with reduced glutathione to form leukotriene C4 (LTC4). Involved in oxidative DNA damage induced by ER stress and anticancer agents by activating LTC4 biosynthetic machinery in nonimmune cells. This is Microsomal glutathione S-transferase 2 (MGST2) from Homo sapiens (Human).